We begin with the raw amino-acid sequence, 170 residues long: uncharacterized protein (170 aa).

The next 3 membrane-spanning stretches (helical) occupy residues 6–26 (PFYF…ILLI), 31–51 (LLFI…LIYI), and 91–111 (IYFS…IVAF).

It to M.jannaschii MJ1249.1, MJ0210.1 and MJ0785.1.

The protein localises to the cell membrane. This is an uncharacterized protein from Methanocaldococcus jannaschii (strain ATCC 43067 / DSM 2661 / JAL-1 / JCM 10045 / NBRC 100440) (Methanococcus jannaschii).